We begin with the raw amino-acid sequence, 311 residues long: Putative dihydroorotate dehydrogenase A (fumarate) (311 aa).

Residues lysine 45, 69–73 (NSMGL), and asparagine 128 each bind substrate. 45–46 (KT) provides a ligand contact to FMN. Residue asparagine 128 participates in FMN binding. The active-site Nucleophile is cysteine 131. The FMN site is built by lysine 165 and valine 193. 194–195 (NS) contacts substrate. FMN contacts are provided by residues glycine 220, 248–249 (GG), and 270–271 (GT).

The protein belongs to the dihydroorotate dehydrogenase family. Type 1 subfamily. Homodimer. Requires FMN as cofactor.

It is found in the cytoplasm. It carries out the reaction (S)-dihydroorotate + fumarate = orotate + succinate. The protein operates within pyrimidine metabolism; UMP biosynthesis via de novo pathway. Its function is as follows. Catalyzes the conversion of dihydroorotate to orotate with fumarate as the electron acceptor. This chain is Putative dihydroorotate dehydrogenase A (fumarate) (pyrD), found in Streptococcus equi subsp. equi (strain 4047).